Consider the following 259-residue polypeptide: UPF0246 protein PBPRA0561 (259 aa).

This sequence belongs to the UPF0246 family.

The sequence is that of UPF0246 protein PBPRA0561 from Photobacterium profundum (strain SS9).